Here is a 50-residue protein sequence, read N- to C-terminus: MPRDGFTLFCTDCKMENYISKKNKKNTPEKVELKKFCAKCNASTLHKEKK.

This sequence belongs to the bacterial ribosomal protein bL33 family.

This is Large ribosomal subunit protein bL33B from Mycoplasmopsis agalactiae (strain NCTC 10123 / CIP 59.7 / PG2) (Mycoplasma agalactiae).